The chain runs to 546 residues: Histidine--tRNA ligase, mitochondrial (546 aa).

Residues 1 to 20 (MLSRSLNKVVTSIKSSSIIR) constitute a mitochondrion transit peptide. L-histidine is bound by residues 129 to 131 (DLT), Arg156, Gln172, Asp176, Arg326, and 330 to 331 (YY).

The protein belongs to the class-II aminoacyl-tRNA synthetase family.

It localises to the cytoplasm. Its subcellular location is the mitochondrion. The catalysed reaction is tRNA(His) + L-histidine + ATP = L-histidyl-tRNA(His) + AMP + diphosphate + H(+). Its function is as follows. Catalyzes the aminoacylation of histidyl-tRNA in both the cytoplasm and the mitochondrion. This chain is Histidine--tRNA ligase, mitochondrial (HTS1), found in Saccharomyces cerevisiae (strain ATCC 204508 / S288c) (Baker's yeast).